The primary structure comprises 152 residues: Superoxide dismutase [Cu-Zn] 2 (152 aa).

Cu cation contacts are provided by His45, His47, and His62. Residues 53 to 81 (TNGSMSTGPHFNPDGKQHGAPEDANRHAG) form a disordered region. Residues His62, His70, His79, and Asp82 each contribute to the Zn(2+) site. Residues 65–81 (PDGKQHGAPEDANRHAG) show a composition bias toward basic and acidic residues. His119 is a Cu cation binding site.

The protein belongs to the Cu-Zn superoxide dismutase family. As to quaternary structure, homodimer. Cu cation is required as a cofactor. Requires Zn(2+) as cofactor.

Its subcellular location is the cytoplasm. It carries out the reaction 2 superoxide + 2 H(+) = H2O2 + O2. Functionally, destroys radicals which are normally produced within the cells and which are toxic to biological systems. This chain is Superoxide dismutase [Cu-Zn] 2 (SODCC2), found in Brassica juncea (Indian mustard).